The sequence spans 741 residues: ABC transporter D family member 2 (741 aa).

Transmembrane regions (helical) follow at residues 39 to 59 (GSLG…FSLV), 119 to 139 (FLSL…SVSI), and 260 to 280 (VVVM…VSGF). One can recognise an ABC transmembrane type-1 domain in the interval 131 to 409 (ARTMLSVSIA…LMVALSQAIG (279 aa)). One can recognise an ABC transporter domain in the interval 518 to 740 (IKFENVSIVS…DDDHLKKPLS (223 aa)). 551–558 (GPNGSGKS) contacts ATP.

The protein belongs to the ABC transporter superfamily. ABCD family. Peroxisomal fatty acyl CoA transporter (TC 3.A.1.203) subfamily.

Its subcellular location is the membrane. This is ABC transporter D family member 2 (abcD2) from Dictyostelium discoideum (Social amoeba).